The chain runs to 195 residues: MPKVGMQPIRRQQLIEATLAAINDVGMHDASIVQIARRAGVSNGIISHYFRDKNGLLEATMRYLISHLGLAVKSRLLSLTENTPRARLRAIVQGNFDDSQTNSAAMKTWLAFWASSLHSPMLHRLQQVNDRRLYSNLCIEFSHCLPKDNARIAAKGLAGLIDGLWLRSALSHDAFNREEALSIAYDYIEQQLTRT.

Residues 8–68 (PIRRQQLIEA…ATMRYLISHL (61 aa)) form the HTH tetR-type domain. The segment at residues 31–50 (SIVQIARRAGVSNGIISHYF) is a DNA-binding region (H-T-H motif).

It functions in the pathway amine and polyamine biosynthesis; betaine biosynthesis via choline pathway [regulation]. Repressor involved in the biosynthesis of the osmoprotectant glycine betaine. It represses transcription of the choline transporter BetT and the genes of BetAB involved in the synthesis of glycine betaine. This is HTH-type transcriptional regulator BetI from Pectobacterium carotovorum subsp. carotovorum (strain PC1).